A 205-amino-acid polypeptide reads, in one-letter code: Dephospho-CoA kinase (205 aa).

A DPCK domain is found at lysine 4–lysine 203. Glycine 12–valine 17 lines the ATP pocket.

Belongs to the CoaE family.

Its subcellular location is the cytoplasm. It catalyses the reaction 3'-dephospho-CoA + ATP = ADP + CoA + H(+). Its pathway is cofactor biosynthesis; coenzyme A biosynthesis; CoA from (R)-pantothenate: step 5/5. Catalyzes the phosphorylation of the 3'-hydroxyl group of dephosphocoenzyme A to form coenzyme A. The chain is Dephospho-CoA kinase from Bacteroides fragilis (strain ATCC 25285 / DSM 2151 / CCUG 4856 / JCM 11019 / LMG 10263 / NCTC 9343 / Onslow / VPI 2553 / EN-2).